We begin with the raw amino-acid sequence, 124 residues long: MGTSLRSQSFREPRPSYGRLHESQGRSLDGRLHRALSLRLGREKSRSQVPDGTEGLEVSVQERLPGTLGDKEQLIQGQRGGGSRRWLRQYQQHVKRRWRSFVASFPSVTLSQPASPETLLDTNN.

Residues 1–28 (MGTSLRSQSFREPRPSYGRLHESQGRSL) are disordered. The span at 9 to 28 (SFREPRPSYGRLHESQGRSL) shows a compositional bias: basic and acidic residues.

This is an uncharacterized protein from Mus musculus (Mouse).